The primary structure comprises 567 residues: Thiol:disulfide interchange protein DsbD (567 aa).

The N-terminal stretch at 1-19 (MAQRIFTLILLLCSTSAFA) is a signal peptide. Intrachain disulfides connect Cys-122-Cys-128 and Cys-185-Cys-307. 7 consecutive transmembrane segments (helical) span residues 170–192 (ALWA…MYPL), 212–234 (LAFI…VAAA), 246–268 (YVLI…LFTL), 297–319 (GAIA…LLYI), 326–348 (WLGG…LVTV), 358–380 (GPWM…VFLL), and 387–409 (AWGL…ITSL). In terms of domain architecture, Thioredoxin spans 435-567 (QDWAFGSPSA…FSAHLHDRQP (133 aa)). Cys-482 and Cys-485 form a disulfide bridge.

This sequence belongs to the thioredoxin family. DsbD subfamily.

Its subcellular location is the cell inner membrane. It catalyses the reaction [protein]-dithiol + NAD(+) = [protein]-disulfide + NADH + H(+). It carries out the reaction [protein]-dithiol + NADP(+) = [protein]-disulfide + NADPH + H(+). In terms of biological role, required to facilitate the formation of correct disulfide bonds in some periplasmic proteins and for the assembly of the periplasmic c-type cytochromes. Acts by transferring electrons from cytoplasmic thioredoxin to the periplasm. This transfer involves a cascade of disulfide bond formation and reduction steps. The polypeptide is Thiol:disulfide interchange protein DsbD (Salmonella typhimurium (strain LT2 / SGSC1412 / ATCC 700720)).